We begin with the raw amino-acid sequence, 438 residues long: uncharacterized protein (438 aa).

His59 is a Zn(2+) binding site. Glu62 serves as the catalytic Proton acceptor. Positions 63 and 139 each coordinate Zn(2+).

It belongs to the peptidase M16 family. The cofactor is Zn(2+).

This is an uncharacterized protein from Mycobacterium tuberculosis (strain CDC 1551 / Oshkosh).